Here is a 121-residue protein sequence, read N- to C-terminus: Neuromedin-B (121 aa).

The signal sequence occupies residues 1-24 (MTLRAVGVRLLGGLLLFALLAAGA). A Methionine amide modification is found at Met56. A propeptide spanning residues 60–121 (SLEPPSPSLL…RRLLVQTLQK (62 aa)) is cleaved from the precursor. The tract at residues 61-80 (LEPPSPSLLGTAPHTSLRDQ) is disordered.

Belongs to the bombesin/neuromedin-B/ranatensin family.

Its subcellular location is the secreted. It localises to the cell projection. It is found in the neuron projection. Stimulates smooth muscle contraction. Induces sighing by acting directly on the pre-Botzinger complex, a cluster of several thousand neurons in the ventrolateral medulla responsible for inspiration during respiratory activity. Contributes to the induction of sneezing following exposure to chemical irritants or allergens which causes release of NMB by nasal sensory neurons and activation of NMBR-expressing neurons in the sneeze-evoking region of the brainstem. These in turn activate neurons of the caudal ventral respiratory group, giving rise to the sneezing response. Contributes to induction of acute itch, possibly through activation of the NMBR receptor on dorsal root ganglion neurons. Increases expression of NMBR and steroidogenic mediators STAR, CYP11A1 and HSD3B1 in Leydig cells, induces secretion of testosterone by Leydig cells and also promotes Leydig cell proliferation. Plays a role in the innate immune response to influenza A virus infection by enhancing interferon alpha expression and reducing expression of IL6. Plays a role in CSF1-induced proliferation of osteoclast precursors by contributing to the positive regulation of the expression of the CSF1 receptor CSF1R. The chain is Neuromedin-B (NMB) from Bos taurus (Bovine).